Here is a 151-residue protein sequence, read N- to C-terminus: MTGFDADDAAALIQSYVDDHGLLSFLGVSVEDASDGEMRLRIPYHEKLTNHGPGEGDVHGGIAATLIDTAGGLAVRSALPKPVAANVATIDLNVSYLRPARGDLIADASVVRVGSTVGVAEISVVTPADTADAEPTEVAVGRGSFRVFRDD.

The protein belongs to the thioesterase PaaI family.

The chain is Putative esterase VNG_1336C from Halobacterium salinarum (strain ATCC 700922 / JCM 11081 / NRC-1) (Halobacterium halobium).